The sequence spans 127 residues: LIM domain-containing protein 2 (127 aa).

Residue M1 is modified to N-acetylmethionine. The interval 1–24 (MFQAAGAAQATPSHDAKGGGSSTV) is disordered. The region spanning 38 to 98 (ETCAACQKTV…KPHFQQLFKS (61 aa)) is the LIM zinc-binding domain. Zn(2+) is bound by residues C40, C43, H61, C64, C67, C70, C88, and H91.

In terms of assembly, interacts with ILK.

It localises to the cytoplasm. The protein localises to the nucleus. Its function is as follows. Acts as an activator of the protein-kinase ILK, thereby regulating cell motility. This is LIM domain-containing protein 2 from Homo sapiens (Human).